The chain runs to 97 residues: Co-chaperonin GroES (97 aa).

It belongs to the GroES chaperonin family. As to quaternary structure, heptamer of 7 subunits arranged in a ring. Interacts with the chaperonin GroEL.

Its subcellular location is the cytoplasm. Together with the chaperonin GroEL, plays an essential role in assisting protein folding. The GroEL-GroES system forms a nano-cage that allows encapsulation of the non-native substrate proteins and provides a physical environment optimized to promote and accelerate protein folding. GroES binds to the apical surface of the GroEL ring, thereby capping the opening of the GroEL channel. In Azotobacter vinelandii (strain DJ / ATCC BAA-1303), this protein is Co-chaperonin GroES.